Consider the following 211-residue polypeptide: MSQFKDKSILKSNEVPEEMFTCISGSTDTNSEMKTVISKEKNEEKSLVKTKNKVNRIRLFLNYHVKELPIMDHSIAERNSEMMKTVMRYKTSYREVTRFLIGSWLLFAEKLIPPFNMKAIIIIETDQELVDVADFEGIEILLGNNIQSCLDSFYMRFYKEDLILYNTANELLLLIDNFKIPKYFAKLDMNQVRLKKIIEKKYMSLIKAGKL.

This is an uncharacterized protein from Lactuca sativa (Garden lettuce).